A 201-amino-acid chain; its full sequence is Small ribosomal subunit protein uS4 (201 aa).

An S4 RNA-binding domain is found at 91–151 (SRLDNVVYRA…EKSQKMNWFE (61 aa)).

It belongs to the universal ribosomal protein uS4 family. In terms of assembly, part of the 30S ribosomal subunit. Contacts protein S5. The interaction surface between S4 and S5 is involved in control of translational fidelity.

In terms of biological role, one of the primary rRNA binding proteins, it binds directly to 16S rRNA where it nucleates assembly of the body of the 30S subunit. Functionally, with S5 and S12 plays an important role in translational accuracy. The polypeptide is Small ribosomal subunit protein uS4 (Corynebacterium glutamicum (strain R)).